We begin with the raw amino-acid sequence, 89 residues long: Small ribosomal subunit protein uS15 (89 aa).

The protein belongs to the universal ribosomal protein uS15 family. Part of the 30S ribosomal subunit. Forms a bridge to the 50S subunit in the 70S ribosome, contacting the 23S rRNA.

One of the primary rRNA binding proteins, it binds directly to 16S rRNA where it helps nucleate assembly of the platform of the 30S subunit by binding and bridging several RNA helices of the 16S rRNA. In terms of biological role, forms an intersubunit bridge (bridge B4) with the 23S rRNA of the 50S subunit in the ribosome. In Acholeplasma laidlawii (strain PG-8A), this protein is Small ribosomal subunit protein uS15.